We begin with the raw amino-acid sequence, 433 residues long: Pyrimidine-nucleoside phosphorylase (433 aa).

81-83 (KHS) contributes to the phosphate binding site. Positions 88 and 90 each coordinate K(+). Phosphate is bound by residues T92, 108 to 110 (KMS), and T120. Substrate-binding residues include R168 and K187. K(+)-binding residues include L243, A246, and E255.

It belongs to the thymidine/pyrimidine-nucleoside phosphorylase family. In terms of assembly, homodimer. Requires K(+) as cofactor.

The enzyme catalyses uridine + phosphate = alpha-D-ribose 1-phosphate + uracil. The catalysed reaction is thymidine + phosphate = 2-deoxy-alpha-D-ribose 1-phosphate + thymine. It carries out the reaction 2'-deoxyuridine + phosphate = 2-deoxy-alpha-D-ribose 1-phosphate + uracil. In terms of biological role, catalyzes phosphorolysis of the pyrimidine nucleosides uridine, thymidine and 2'-deoxyuridine with the formation of the corresponding pyrimidine base and ribose-1-phosphate. The protein is Pyrimidine-nucleoside phosphorylase (pdp) of Staphylococcus haemolyticus (strain JCSC1435).